The chain runs to 938 residues: Protein NLP3 (938 aa).

Disordered regions lie at residues 1–26 (MEVD…GGGD) and 557–597 (LADD…KAEK). Gly residues predominate over residues 12–26 (AGEGGGGGIGGGGGD). Residues 580 to 597 (SLHKSNKPPERRRGKAEK) are compositionally biased toward basic and acidic residues. Residues 585-666 (NKPPERRRGK…IESVQGSDAA (82 aa)) form the RWP-RK domain. A coiled-coil region spans residues 640-662 (SRKINKVNRSLSKLKQVIESVQG). A disordered region spans residues 743–769 (DKASHSRSSSGEGSINSRTSEASCHGS). Low complexity predominate over residues 748 to 762 (SRSSSGEGSINSRTS). The PB1 domain maps to 847-926 (TVTIKASFKE…HVIRLLVSDV (80 aa)).

The protein localises to the nucleus. Probable transcription factor. The sequence is that of Protein NLP3 (NLP3) from Oryza sativa subsp. japonica (Rice).